Here is a 105-residue protein sequence, read N- to C-terminus: Large ribosomal subunit protein uL24 (105 aa).

The protein belongs to the universal ribosomal protein uL24 family. As to quaternary structure, part of the 50S ribosomal subunit.

One of two assembly initiator proteins, it binds directly to the 5'-end of the 23S rRNA, where it nucleates assembly of the 50S subunit. In terms of biological role, one of the proteins that surrounds the polypeptide exit tunnel on the outside of the subunit. This is Large ribosomal subunit protein uL24 from Xanthomonas campestris pv. campestris (strain 8004).